The following is a 274-amino-acid chain: Diaminopimelate epimerase (274 aa).

Asn-11, Gln-44, and Asn-64 together coordinate substrate. The active-site Proton donor is Cys-73. Residues Gly-74–Asn-75, Asn-157, Asn-190, and Glu-208–Arg-209 contribute to the substrate site. Residue Cys-217 is the Proton acceptor of the active site. Residue Gly-218 to Ser-219 participates in substrate binding.

Belongs to the diaminopimelate epimerase family. Homodimer.

Its subcellular location is the cytoplasm. It carries out the reaction (2S,6S)-2,6-diaminopimelate = meso-2,6-diaminopimelate. The protein operates within amino-acid biosynthesis; L-lysine biosynthesis via DAP pathway; DL-2,6-diaminopimelate from LL-2,6-diaminopimelate: step 1/1. Functionally, catalyzes the stereoinversion of LL-2,6-diaminopimelate (L,L-DAP) to meso-diaminopimelate (meso-DAP), a precursor of L-lysine and an essential component of the bacterial peptidoglycan. The sequence is that of Diaminopimelate epimerase from Edwardsiella ictaluri (strain 93-146).